The sequence spans 227 residues: Ribonuclease 3 (227 aa).

Residues 4 to 126 (LDRLERKIGY…IIGAMSLDQG (123 aa)) enclose the RNase III domain. Residue glutamate 39 coordinates Mg(2+). Residue aspartate 43 is part of the active site. The Mg(2+) site is built by aspartate 112 and glutamate 115. Glutamate 115 is an active-site residue. The DRBM domain maps to 153–226 (DAKTRLQEYL…AEQILKELDI (74 aa)).

The protein belongs to the ribonuclease III family. As to quaternary structure, homodimer. Requires Mg(2+) as cofactor.

The protein localises to the cytoplasm. It carries out the reaction Endonucleolytic cleavage to 5'-phosphomonoester.. In terms of biological role, digests double-stranded RNA. Involved in the processing of primary rRNA transcript to yield the immediate precursors to the large and small rRNAs (23S and 16S). Processes some mRNAs, and tRNAs when they are encoded in the rRNA operon. Processes pre-crRNA and tracrRNA of type II CRISPR loci if present in the organism. The protein is Ribonuclease 3 of Haemophilus influenzae (strain ATCC 51907 / DSM 11121 / KW20 / Rd).